The primary structure comprises 830 residues: Lon protease (830 aa).

The 196-residue stretch at 20-215 folds into the Lon N-terminal domain; the sequence is LPAVAIRDVV…LLIKILANEV (196 aa). 367 to 374 contacts ATP; that stretch reads GPPGVGKT. The Lon proteolytic domain maps to 602–781; it reads ENGVGISTGL…DEIVKIAFEK (180 aa). Active-site residues include S687 and K730. Positions 784–830 are disordered; the sequence is PKSSFKKSKTAPKKESAKKAAKSKKPAVKKPAVKKTKQVKKTAKKKK. The segment covering 802–830 has biased composition (basic residues); the sequence is KAAKSKKPAVKKPAVKKTKQVKKTAKKKK.

Belongs to the peptidase S16 family. Homohexamer. Organized in a ring with a central cavity.

It localises to the cytoplasm. It catalyses the reaction Hydrolysis of proteins in presence of ATP.. ATP-dependent serine protease that mediates the selective degradation of mutant and abnormal proteins as well as certain short-lived regulatory proteins. Required for cellular homeostasis and for survival from DNA damage and developmental changes induced by stress. Degrades polypeptides processively to yield small peptide fragments that are 5 to 10 amino acids long. Binds to DNA in a double-stranded, site-specific manner. This Elusimicrobium minutum (strain Pei191) protein is Lon protease.